The chain runs to 473 residues: Glutamate--tRNA ligase (473 aa).

A 'HIGH' region motif is present at residues Pro9–Gly19. Zn(2+)-binding residues include Cys98, Cys100, Cys125, and Asp127. Residues Lys237–Arg241 carry the 'KMSKS' region motif. Position 240 (Lys240) interacts with ATP.

It belongs to the class-I aminoacyl-tRNA synthetase family. Glutamate--tRNA ligase type 1 subfamily. In terms of assembly, monomer. Requires Zn(2+) as cofactor.

The protein localises to the cytoplasm. It carries out the reaction tRNA(Glu) + L-glutamate + ATP = L-glutamyl-tRNA(Glu) + AMP + diphosphate. Functionally, catalyzes the attachment of glutamate to tRNA(Glu) in a two-step reaction: glutamate is first activated by ATP to form Glu-AMP and then transferred to the acceptor end of tRNA(Glu). The chain is Glutamate--tRNA ligase from Sodalis glossinidius (strain morsitans).